Reading from the N-terminus, the 158-residue chain is NAD(P)H-quinone oxidoreductase subunit J, chloroplastic (158 aa).

The protein belongs to the complex I 30 kDa subunit family. In terms of assembly, NDH is composed of at least 16 different subunits, 5 of which are encoded in the nucleus.

The protein localises to the plastid. Its subcellular location is the chloroplast thylakoid membrane. The catalysed reaction is a plastoquinone + NADH + (n+1) H(+)(in) = a plastoquinol + NAD(+) + n H(+)(out). The enzyme catalyses a plastoquinone + NADPH + (n+1) H(+)(in) = a plastoquinol + NADP(+) + n H(+)(out). NDH shuttles electrons from NAD(P)H:plastoquinone, via FMN and iron-sulfur (Fe-S) centers, to quinones in the photosynthetic chain and possibly in a chloroplast respiratory chain. The immediate electron acceptor for the enzyme in this species is believed to be plastoquinone. Couples the redox reaction to proton translocation, and thus conserves the redox energy in a proton gradient. The protein is NAD(P)H-quinone oxidoreductase subunit J, chloroplastic of Dioscorea elephantipes (Elephant's foot yam).